The following is a 131-amino-acid chain: Small ribosomal subunit protein eS8 (131 aa).

The segment at 11–36 is disordered; it reads DLKKPSGGKKGRVRKTKKKALCGGPP. Basic residues predominate over residues 16–30; the sequence is SGGKKGRVRKTKKKA.

It belongs to the eukaryotic ribosomal protein eS8 family. As to quaternary structure, part of the 30S ribosomal subunit.

The sequence is that of Small ribosomal subunit protein eS8 from Pyrobaculum islandicum (strain DSM 4184 / JCM 9189 / GEO3).